The sequence spans 119 residues: NADH-quinone oxidoreductase subunit A (119 aa).

3 helical membrane-spanning segments follow: residues Phe-7–Gly-27, Leu-63–Val-83, and Ile-88–Val-108.

It belongs to the complex I subunit 3 family. In terms of assembly, NDH-1 is composed of 14 different subunits. Subunits NuoA, H, J, K, L, M, N constitute the membrane sector of the complex.

The protein resides in the cell membrane. The catalysed reaction is a quinone + NADH + 5 H(+)(in) = a quinol + NAD(+) + 4 H(+)(out). NDH-1 shuttles electrons from NADH, via FMN and iron-sulfur (Fe-S) centers, to quinones in the respiratory chain. The immediate electron acceptor for the enzyme in this species is believed to be ubiquinone. Couples the redox reaction to proton translocation (for every two electrons transferred, four hydrogen ions are translocated across the cytoplasmic membrane), and thus conserves the redox energy in a proton gradient. This chain is NADH-quinone oxidoreductase subunit A, found in Polynucleobacter asymbioticus (strain DSM 18221 / CIP 109841 / QLW-P1DMWA-1) (Polynucleobacter necessarius subsp. asymbioticus).